A 190-amino-acid polypeptide reads, in one-letter code: Threonylcarbamoyl-AMP synthase (190 aa).

The YrdC-like domain occupies 7–190 (GDAIAAAIDV…ALTGELFRQG (184 aa)).

This sequence belongs to the SUA5 family. TsaC subfamily.

The protein localises to the cytoplasm. The catalysed reaction is L-threonine + hydrogencarbonate + ATP = L-threonylcarbamoyladenylate + diphosphate + H2O. Functionally, required for the formation of a threonylcarbamoyl group on adenosine at position 37 (t(6)A37) in tRNAs that read codons beginning with adenine. Catalyzes the conversion of L-threonine, HCO(3)(-)/CO(2) and ATP to give threonylcarbamoyl-AMP (TC-AMP) as the acyladenylate intermediate, with the release of diphosphate. This is Threonylcarbamoyl-AMP synthase from Escherichia coli O1:K1 / APEC.